Consider the following 278-residue polypeptide: S-formylglutathione hydrolase YeiG (278 aa).

Active-site charge relay system residues include S145, D223, and H256.

The protein belongs to the esterase D family.

It carries out the reaction S-formylglutathione + H2O = formate + glutathione + H(+). Functionally, serine hydrolase involved in the detoxification of formaldehyde. Hydrolyzes S-formylglutathione to glutathione and formate. This chain is S-formylglutathione hydrolase YeiG (yeiG), found in Shigella boydii serotype 4 (strain Sb227).